The sequence spans 196 residues: Probable GTP-binding protein EngB (196 aa).

One can recognise an EngB-type G domain in the interval Asn22–Gln196. Residues Gly30–Ser37, Gly57–Thr61, Asp75–Gly78, Thr142–Asp145, and Phe175–Ser177 contribute to the GTP site. The Mg(2+) site is built by Ser37 and Thr59.

It belongs to the TRAFAC class TrmE-Era-EngA-EngB-Septin-like GTPase superfamily. EngB GTPase family. Requires Mg(2+) as cofactor.

In terms of biological role, necessary for normal cell division and for the maintenance of normal septation. In Lactobacillus acidophilus (strain ATCC 700396 / NCK56 / N2 / NCFM), this protein is Probable GTP-binding protein EngB.